Here is a 1201-residue protein sequence, read N- to C-terminus: MEKQDQTSREEILKKIMDSLGQDGVPSKTVLVGEAGIGKTWLAKEVSQRVTQEKYNVLWLHLNKKIEDEKSLYEILAAQLSIIYEFEEGEEPDELDYPLESLKEKIKEEMIKHKKDNLLLILDDEGSMTTEEDVMQELNLQDFLKEYSAVKILVTRRDEREEKESTTIKVGPLTEKESLDLLHDAEDLLTSFTSEDWPVLLKRLCDNKEIKEPTLMSCILSKSKGLPAAIVVLIKSLNSIKSMSAKQRKIFKELILSSKSLDEAAASKNAIDRSRYNPVLQLSYELLKPDETVKRPVIACFWHILDFYKYSGCAYYRDLIVHWMLEGYFDPVKSVDKAYQEGHSILMDFMNRGILKIQEDNMVVPEFSMSNLLDLQDCGFFGRSSLGFDRVYGGDKRKGLGKIILIDDMIQTIQSKKKNITTIIASGNRLRREVHGKFFEKPEMQDLEVVVLFEPTFHELVLSLSKLKKLRVLVIRDCDLIDNIDKLSGLQGLHVLEVSGASSLVNIPDDFFKNMTQLQSLNLSGLAIKSSPSTIEKLSMLRCFILRHCSELQDLPNFIVETRKLEVIDIHGARKLESYFDRVKDWKDYKGKNKNFAQLQLLEHLDFSETKIIRLPIFHLKDSTNDFSTMPILTRLLLRNCTRLKRLPQLRPLTNLQILDACGATDLVEMLEVCLEEKKELRILDMSKTSLPELADTIADVVNLNKLLLRNCSLIEELPSIEKLTHLEVFDVSGCIKLKNINGSFGEMSYLHEVNLSETNLSELPDKISELSNLKELIIRKCSKLKTLPNLEKLTNLEIFDVSGCTELETIEGSFENLSCLHKVNLSETNLGELPNKISELSNLKELILRNCSKLKALPNLEKLTHLVIFDVSGCTNLDKIEESFESMSYLCEVNLSGTNLKTFPELPKQSILCSSKRIVLADSSCIERDQWSQIKECLTSKSEGSSFSNVGEKTREKLLYHGNRYRVIDPEVPLNIDIVDIKRSTDLKTEYIAKAEYVSIAENGSKSVSSLFDELQMASVKGCWVERCKNMDVLFESDEQLEKEKSSSPSLQTLWISNLPLLTSLYSSKGGFIFKNLKKLSVDCCPSIKWLFPEIPDNLEILRVKFCDKLERLFEVKAGELSKLRKLHLLDLPVLSVLGANFPNLEKCTIEKCPKLKAREDEPRIGARITDEISEDQPHKNTIGPETQTPTQPTKATDTV.

Residue 33-40 coordinates ATP; that stretch reads GEAGIGKT. LRR repeat units follow at residues 469-491, 492-514, 517-539, 540-562, 680-701, 703-725, 726-748, 750-771, 773-795, 796-818, 820-841, 843-865, 866-888, and 890-911; these read KLRVLVIRDCDLIDNIDKLSGLQ, GLHVLEVSGASSLVNIPDDFFKN, QLQSLNLSGLAIKSSPSTIEKLS, MLRCFILRHCSELQDLPNFIVET, ELRILDMSKTSLPELADTIADV, NLNKLLLRNCSLIEELPSIEKLT, HLEVFDVSGCIKLKNINGSFGEM, YLHEVNLSETNLSELPDKISEL, NLKELIIRKCSKLKTLPNLEKLT, NLEIFDVSGCTELETIEGSFENL, CLHKVNLSETNLGELPNKISEL, NLKELILRNCSKLKALPNLEKLT, HLVIFDVSGCTNLDKIEESFESM, and YLCEVNLSGTNLKTFPELPKQS. A compositionally biased stretch (basic and acidic residues) spans 1162-1180; it reads DEPRIGARITDEISEDQPH. The disordered stretch occupies residues 1162–1201; sequence DEPRIGARITDEISEDQPHKNTIGPETQTPTQPTKATDTV. Residues 1185–1201 are compositionally biased toward polar residues; that stretch reads GPETQTPTQPTKATDTV.

It belongs to the disease resistance NB-LRR family.

Functionally, potential disease resistance protein. This is Putative disease resistance protein At4g19050 from Arabidopsis thaliana (Mouse-ear cress).